The following is a 95-amino-acid chain: Small ribosomal subunit protein bS18 (95 aa).

Belongs to the bacterial ribosomal protein bS18 family. Part of the 30S ribosomal subunit. Forms a tight heterodimer with protein bS6.

In terms of biological role, binds as a heterodimer with protein bS6 to the central domain of the 16S rRNA, where it helps stabilize the platform of the 30S subunit. The chain is Small ribosomal subunit protein bS18 from Rickettsia massiliae (strain Mtu5).